The chain runs to 160 residues: ATP synthase subunit delta, mitochondrial (160 aa).

The N-terminal 22 residues, 1 to 22, are a transit peptide targeting the mitochondrion; it reads MFRQSLRSIARTRTGTIGVRTY.

F-type ATP synthases have 2 components, the catalytic core F(1) and the membrane-embedded component F(0), linked together by a central stalk and a peripheral stalk. The central stalk, also called rotor shaft, is often seen as part of F(1). The peripheral stalk is seen as part of F(0). F(0) contains the membrane channel next to the rotor. F-type ATP synthases form dimers but each monomer functions independently in ATP generation. The dimer consists of 18 different polypeptides: ATP1 (subunit alpha, part of F(1), 3 molecules per monomer), ATP2 (subunit beta, part of F(1), 3 molecules per monomer), ATP3 (subunit gamma, part of the central stalk), ATP4 (subunit b, part of the peripheral stalk), ATP5/OSCP (subunit 5/OSCP, part of the peripheral stalk), ATP6 (subunit a, part of the peripheral stalk), ATP7 (subunit d, part of the peripheral stalk), ATP8 (subunit 8, part of the peripheral stalk), OLI1 (subunit c, part of the rotor, 10 molecules per monomer), ATP14 (subunit h, part of the peripheral stalk), ATP15 (subunit epsilon, part of the central stalk), ATP16 (subunit delta, part of the central stalk), ATP17 (subunit f, part of the peripheral stalk), ATP18 (subunit i/j, part of the peripheral stalk). Dimer-specific subunits are ATP19 (subunit k, at interface between monomers), ATP20 (subunit g, at interface between monomers), TIM11 (subunit e, at interface between monomers). Also contains subunit L.

Its subcellular location is the mitochondrion inner membrane. Functionally, mitochondrial membrane ATP synthase (F(1)F(0) ATP synthase or Complex V) produces ATP from ADP in the presence of a proton gradient across the membrane which is generated by electron transport complexes of the respiratory chain. F-type ATP synthases consist of two structural domains, F(1) - containing the extramembraneous catalytic core, and F(0) - containing the membrane proton channel, linked together by a central stalk and a peripheral stalk. During catalysis, ATP synthesis in the catalytic domain of F(1) is coupled via a rotary mechanism of the central stalk subunits to proton translocation. Part of the complex F(1) domain and the central stalk which is part of the complex rotary element. Rotation of the central stalk against the surrounding alpha/ATP1(3)beta/ATP2(3) subunits leads to hydrolysis of ATP in three separate catalytic sites on the beta/ATP2 subunits. This chain is ATP synthase subunit delta, mitochondrial, found in Pichia angusta (Yeast).